A 212-amino-acid chain; its full sequence is MGTNKPVVIGIAGGSGSGKTSVTKAIFDHFQGHSILILEQDYYYKDQSHLPMEERLKTNYDHPLAFDNDLLIEHLHQLLAYKMIEKPVYDYTLHTRSEEVIPVEPKDVIILEGILVLEDPRLCELMDIKLFVDTDADLRILRRMQRDIKERGRTMDSVIEQYVNVVRPMHNQFIEPSKKFADIIIPEGGQNHVAIDIMVTKIATILEEKVNL.

13-20 contacts ATP; the sequence is GGSGSGKT.

This sequence belongs to the uridine kinase family.

Its subcellular location is the cytoplasm. The catalysed reaction is uridine + ATP = UMP + ADP + H(+). It catalyses the reaction cytidine + ATP = CMP + ADP + H(+). It functions in the pathway pyrimidine metabolism; CTP biosynthesis via salvage pathway; CTP from cytidine: step 1/3. Its pathway is pyrimidine metabolism; UMP biosynthesis via salvage pathway; UMP from uridine: step 1/1. The protein is Uridine kinase of Bacillus cytotoxicus (strain DSM 22905 / CIP 110041 / 391-98 / NVH 391-98).